The chain runs to 395 residues: Phosphoribulokinase, chloroplastic (395 aa).

Residues 1 to 46 (MAVSTIYSTQALNSTHFLTSSSSSKQVFLYRRQPQTNRRFNTLITC) constitute a chloroplast transit peptide. Residues C61 and C100 are joined by a disulfide bond.

The protein belongs to the phosphoribulokinase family.

The protein localises to the plastid. Its subcellular location is the chloroplast. It carries out the reaction D-ribulose 5-phosphate + ATP = D-ribulose 1,5-bisphosphate + ADP + H(+). Its pathway is carbohydrate biosynthesis; Calvin cycle. Its activity is regulated as follows. Light regulated via thioredoxin by reversible oxidation/reduction of sulfhydryl/disulfide groups. The chain is Phosphoribulokinase, chloroplastic from Arabidopsis thaliana (Mouse-ear cress).